Consider the following 203-residue polypeptide: SPbeta prophage-derived uncharacterized protein YouA (203 aa).

A disordered region spans residues 1 to 23; it reads MAFLNQDGDKYTSAKDDGTGNPI. The segment covering 7-18 has biased composition (basic and acidic residues); the sequence is DGDKYTSAKDDG.

In Bacillus subtilis (strain 168), this protein is SPbeta prophage-derived uncharacterized protein YouA (youA).